We begin with the raw amino-acid sequence, 850 residues long: G-type lectin S-receptor-like serine/threonine-protein kinase CES101 (850 aa).

A signal peptide spans 1–22 (MWSNCIFLTLFTFYLFLGQSCC). At 23 to 423 (QTDTLLQGQY…IKGSKLAATW (401 aa)) the chain is on the extracellular side. The Bulb-type lectin domain occupies 24 to 144 (TDTLLQGQYL…DSDGSMKRTL (121 aa)). Residues Asn-55, Asn-118, Asn-194, and Asn-374 are each glycosylated (N-linked (GlcNAc...) asparagine). The 83-residue stretch at 334–416 (CSRFGYTFRE…PRTIYIRIKG (83 aa)) folds into the PAN domain. 2 cysteine pairs are disulfide-bonded: Cys-367–Cys-390 and Cys-371–Cys-377. A helical membrane pass occupies residues 424–444 (LVVVASLFLIIPVTWLIIYLV). At 445-850 (LRKFKIKGTN…RVTITVMEAR (406 aa)) the chain is on the cytoplasmic side. The region spanning 527 to 816 (FSDANKLGEG…ALSLPKEPAF (290 aa)) is the Protein kinase domain. Residues 533–541 (LGEGGFGPV) and Lys-555 contribute to the ATP site. Position 561 is a phosphoserine (Ser-561). Positions 616 to 633 (LRKIVLDWKLRFRIMEGI) are caM-binding. The active-site Proton acceptor is Asp-652. Residue Ser-669 is modified to Phosphoserine. Thr-686 carries the phosphothreonine modification. Phosphoserine occurs at positions 730 and 838. Thr-845 is modified (phosphothreonine).

This sequence belongs to the protein kinase superfamily. Ser/Thr protein kinase family. Mostly expressed in leaves, and, to a lower extent, in roots and flowers.

It is found in the cell membrane. The catalysed reaction is L-seryl-[protein] + ATP = O-phospho-L-seryl-[protein] + ADP + H(+). The enzyme catalyses L-threonyl-[protein] + ATP = O-phospho-L-threonyl-[protein] + ADP + H(+). Its function is as follows. Promotes the expression of genes involved in photosynthesis at least in dedifferentiated calli. This Arabidopsis thaliana (Mouse-ear cress) protein is G-type lectin S-receptor-like serine/threonine-protein kinase CES101 (CES101).